Here is a 949-residue protein sequence, read N- to C-terminus: Sensor histidine kinase RcsC (949 aa).

The Cytoplasmic segment spans residues 1–19; the sequence is MKYLASFRTTLKASRYMFR. Residues 20-41 form a helical membrane-spanning segment; sequence ALALVLWLLIAFSSVFYIVNAL. Over 42–313 the chain is Periplasmic; that stretch reads HQRESEIRQE…PVDKVLERIR (272 aa). The helical transmembrane segment at 314-335 threads the bilayer; it reads MLILNAILLNVLAGAALFTLAR. Residues 336–949 are Cytoplasmic-facing; sequence MYERRIFIPA…AERVRKSRDS (614 aa). Residues 357 to 425 form the PAS domain; that stretch reads QFNRKIVASA…VLTSNNTNLQ (69 aa). The Histidine kinase domain occupies 476–692; the sequence is TVSHELRTPL…QFTVRIPLYG (217 aa). His479 bears the Phosphohistidine; by autocatalysis mark. The 101-residue stretch at 705–805 folds into the ABL domain; that stretch reads SGKRCWLAVR…ARIYLIEMES (101 aa). The region spanning 826–940 is the Response regulatory domain; that stretch reads MILVVDDHPI…VIKQTLTLYA (115 aa). At Asp875 the chain carries 4-aspartylphosphate.

It belongs to the RcsC family. As to quaternary structure, interacts with RcsD. In terms of processing, autophosphorylated. Activation probably requires a transfer of a phosphate group from a His in the transmitter domain to an Asp in the receiver domain.

The protein localises to the cell inner membrane. The enzyme catalyses ATP + protein L-histidine = ADP + protein N-phospho-L-histidine.. With respect to regulation, the Rcs phosphorelay may be activated by RcsF. DjlA, LolA and OmpG might act as a regulator of the phosphorelay. Activity is probably up-regulated by YmgA/AriR, and possibly down-regulated by YcgZ, all 3 are connector proteins providing additional signal input into signaling system. In terms of biological role, component of the Rcs signaling system, which controls transcription of numerous genes. RcsC functions as a membrane-associated protein kinase that phosphorylates RcsD in response to environmental signals. The phosphoryl group is then transferred to the response regulator RcsB. RcsC also has phosphatase activity. The system controls expression of genes involved in colanic acid capsule synthesis, biofilm formation and cell division. This Escherichia coli (strain K12) protein is Sensor histidine kinase RcsC.